The chain runs to 208 residues: LexA repressor (208 aa).

Residues 28 to 48 (RAEIARELGFRSANAAEEHLK) constitute a DNA-binding region (H-T-H motif). Catalysis depends on for autocatalytic cleavage activity residues S125 and K162.

The protein belongs to the peptidase S24 family. Homodimer.

It carries out the reaction Hydrolysis of Ala-|-Gly bond in repressor LexA.. Its function is as follows. Represses a number of genes involved in the response to DNA damage (SOS response), including recA and lexA. In the presence of single-stranded DNA, RecA interacts with LexA causing an autocatalytic cleavage which disrupts the DNA-binding part of LexA, leading to derepression of the SOS regulon and eventually DNA repair. The chain is LexA repressor from Aliivibrio fischeri (strain ATCC 700601 / ES114) (Vibrio fischeri).